The primary structure comprises 257 residues: Achaete-scute complex protein T3 (257 aa).

Residues 83–145 form the bHLH domain; that stretch reads PSVARRNARE…RIAVEYIRGL (63 aa). Positions 161–221 are disordered; it reads YNSADESSND…SEISGGGYIK (61 aa). 2 stretches are compositionally biased toward low complexity: residues 165-184 and 193-213; these read DESSNDGSSYNDYNDSLDSS and QSAQSHSYHSASPTPSYSGSE.

Efficient DNA binding requires dimerization with another bHLH protein. As to expression, l(1)SC, SC and AC strongly label the presumptive stomatogastric nervous system, while ASE is more prominent in the presumptive procephalic lobe.

Its function is as follows. AS-C proteins are involved in the determination of the neuronal precursors in the peripheral nervous system and the central nervous system. This Drosophila melanogaster (Fruit fly) protein is Achaete-scute complex protein T3 (l(1)sc).